The primary structure comprises 116 residues: T cell receptor alpha variable 14/delta variable 4 (116 aa).

The first 21 residues, 1–21 (MSLSSLLKVVTASLWLGPGIA), serve as a signal peptide directing secretion. The Ig-like domain maps to 22 to 116 (QKITQTQPGM…SAMYFCAMRE (95 aa)). The cysteines at positions 43 and 112 are disulfide-linked. N-linked (GlcNAc...) asparagine glycosylation is present at Asn-78.

Alpha-beta TR is a heterodimer composed of an alpha and beta chain; disulfide-linked. The alpha-beta TR is associated with the transmembrane signaling CD3 coreceptor proteins to form the TR-CD3 (TcR or TCR). The assembly of alpha-beta TR heterodimers with CD3 occurs in the endoplasmic reticulum where a single alpha-beta TR heterodimer associates with one CD3D-CD3E heterodimer, one CD3G-CD3E heterodimer and one CD247 homodimer forming a stable octameric structure. CD3D-CD3E and CD3G-CD3E heterodimers preferentially associate with TR alpha and TR beta chains, respectively. The association of the CD247 homodimer is the last step of TcR assembly in the endoplasmic reticulum and is required for transport to the cell surface.

Its subcellular location is the cell membrane. Its function is as follows. V region of the variable domain of T cell receptor (TR) alpha chain that participates in the antigen recognition. Alpha-beta T cell receptors are antigen specific receptors which are essential to the immune response and are present on the cell surface of T lymphocytes. Recognize peptide-major histocompatibility (MH) (pMH) complexes that are displayed by antigen presenting cells (APC), a prerequisite for efficient T cell adaptive immunity against pathogens. Binding of alpha-beta TR to pMH complex initiates TR-CD3 clustering on the cell surface and intracellular activation of LCK that phosphorylates the ITAM motifs of CD3G, CD3D, CD3E and CD247 enabling the recruitment of ZAP70. In turn ZAP70 phosphorylates LAT, which recruits numerous signaling molecules to form the LAT signalosome. The LAT signalosome propagates signal branching to three major signaling pathways, the calcium, the mitogen-activated protein kinase (MAPK) kinase and the nuclear factor NF-kappa-B (NF-kB) pathways, leading to the mobilization of transcription factors that are critical for gene expression and essential for T cell growth and differentiation. The T cell repertoire is generated in the thymus, by V-(D)-J rearrangement. This repertoire is then shaped by intrathymic selection events to generate a peripheral T cell pool of self-MH restricted, non-autoaggressive T cells. Post-thymic interaction of alpha-beta TR with the pMH complexes shapes TR structural and functional avidity. In Homo sapiens (Human), this protein is T cell receptor alpha variable 14/delta variable 4.